Consider the following 169-residue polypeptide: Putative ribonuclease VapC50 (169 aa).

Toxic component of a type II toxin-antitoxin (TA) system. An RNase. The cognate antitoxin is VapB50. The protein is Putative ribonuclease VapC50 of Mycobacterium tuberculosis (strain ATCC 25618 / H37Rv).